A 278-amino-acid chain; its full sequence is HTH-type transcriptional activator RhaS (278 aa).

An HTH araC/xylS-type domain is found at 174–272; that stretch reads NQLMAWLEDH…NWSPRDIRQG (99 aa). 2 DNA-binding regions (H-T-H motif) span residues 191-212 and 239-262; these read EAVA…KQHT and VTEI…RREF.

Binds DNA as a dimer.

It is found in the cytoplasm. Functionally, activates expression of the rhaBAD and rhaT operons. This Salmonella heidelberg (strain SL476) protein is HTH-type transcriptional activator RhaS.